The primary structure comprises 339 residues: Uridylate kinase PUMPKIN, chloroplastic (339 aa).

The N-terminal 53 residues, 1-53 (MAIPLPLTSCSPISTSSSISRTSFVPLTLRNRTFFSNQNYSRRVLISCSSSLS), are a transit peptide targeting the chloroplast. Residues 52-79 (LSSDNGSSPDSMNGNGNGNGSSLNGQSS) show a composition bias toward low complexity. The disordered stretch occupies residues 52–89 (LSSDNGSSPDSMNGNGNGNGSSLNGQSSFPRLPSFDGT). Residue 102 to 105 (KVSG) participates in ATP binding. Residues 110-115 (GDEEQN) form an involved in allosteric activation by GTP region. G144 provides a ligand contact to UMP. ATP contacts are provided by G145 and R149. D165 lines the UMP pocket. ATP-binding positions include 180–184 (QATME) and 189–191 (PTR). 226-233 (TGNPFFTT) contacts UMP. ATP contacts are provided by T253, F259, and D262.

Belongs to the UMP kinase family. As to quaternary structure, homomultimer. Homohexamer. Forms RNA-containing megadalton-sized complexes. Expressed exclusively in leaves, but not in roots.

It is found in the plastid. Its subcellular location is the chloroplast stroma. The catalysed reaction is UMP + ATP = UDP + ADP. The protein operates within pyrimidine metabolism; CTP biosynthesis via de novo pathway; UDP from UMP (UMPK route): step 1/1. Catalyzes the reversible phosphorylation of UMP to UDP. Required for specific post-transcriptional processes of many plastid transcripts (e.g. PSI (PsaA, PsaF), PSII (D1, CP43, CP47), Cytochrome b(6)f (Cytb(6)), ATP synthase (AtpC), LHCs (LHCa3, LHCb2), and NDH (NdhH)), thus being essential for retaining photosynthetic activity in chloroplasts. Associates with group II introns of the plastid transcripts trnG-UCC, trnV-UAC, petB, petD and ndhA to stabilize corresponding precursor RNAs. The sequence is that of Uridylate kinase PUMPKIN, chloroplastic from Arabidopsis thaliana (Mouse-ear cress).